Here is a 109-residue protein sequence, read N- to C-terminus: Large ribosomal subunit protein uL22 (109 aa).

The protein belongs to the universal ribosomal protein uL22 family. Part of the 50S ribosomal subunit.

In terms of biological role, this protein binds specifically to 23S rRNA; its binding is stimulated by other ribosomal proteins, e.g. L4, L17, and L20. It is important during the early stages of 50S assembly. It makes multiple contacts with different domains of the 23S rRNA in the assembled 50S subunit and ribosome. The globular domain of the protein is located near the polypeptide exit tunnel on the outside of the subunit, while an extended beta-hairpin is found that lines the wall of the exit tunnel in the center of the 70S ribosome. This Paraburkholderia phymatum (strain DSM 17167 / CIP 108236 / LMG 21445 / STM815) (Burkholderia phymatum) protein is Large ribosomal subunit protein uL22.